A 311-amino-acid chain; its full sequence is Probable manganese-dependent inorganic pyrophosphatase (311 aa).

His-9, Asp-13, Asp-15, Asp-77, His-99, and Asp-151 together coordinate Mn(2+).

It belongs to the PPase class C family. Requires Mn(2+) as cofactor.

The protein resides in the cytoplasm. The catalysed reaction is diphosphate + H2O = 2 phosphate + H(+). This is Probable manganese-dependent inorganic pyrophosphatase from Streptococcus pyogenes serotype M49 (strain NZ131).